A 1071-amino-acid polypeptide reads, in one-letter code: Carbamoyl phosphate synthase large chain (1071 aa).

The interval 1–399 (MPKREDIKKV…SLLKAFKSLD (399 aa)) is carboxyphosphate synthetic domain. ATP is bound by residues Arg-129, Arg-169, Gly-175, Gly-176, Glu-208, Val-210, Glu-215, Gly-241, Val-242, His-243, Gln-284, and Glu-296. The region spanning 133-325 (KETMLRIGEK…IARVTAKIAI (193 aa)) is the ATP-grasp 1 domain. Residues Gln-284, Glu-296, and Asn-298 each coordinate Mg(2+). Mn(2+) is bound by residues Gln-284, Glu-296, and Asn-298. The segment at 400-540 (IDNQLGNKHW…YSTYEDSCET (141 aa)) is oligomerization domain. The interval 541–932 (NATTDKKKIL…YKAELAADNV (392 aa)) is carbamoyl phosphate synthetic domain. Residues 673 to 864 (YILMKELGVP…LAKIAAKVIA (192 aa)) enclose the ATP-grasp 2 domain. ATP is bound by residues Arg-709, Asp-748, Leu-750, Glu-755, Gly-780, Val-781, His-782, Ser-783, Gln-823, and Glu-835. Positions 823, 835, and 837 each coordinate Mg(2+). Gln-823, Glu-835, and Asn-837 together coordinate Mn(2+). Residues 931-1071 (NVLPLTGKVF…INEYHKEMEN (141 aa)) form the MGS-like domain. The tract at residues 933–1071 (LPLTGKVFLS…INEYHKEMEN (139 aa)) is allosteric domain.

This sequence belongs to the CarB family. In terms of assembly, composed of two chains; the small (or glutamine) chain promotes the hydrolysis of glutamine to ammonia, which is used by the large (or ammonia) chain to synthesize carbamoyl phosphate. Tetramer of heterodimers (alpha,beta)4. Requires Mg(2+) as cofactor. Mn(2+) is required as a cofactor.

The catalysed reaction is hydrogencarbonate + L-glutamine + 2 ATP + H2O = carbamoyl phosphate + L-glutamate + 2 ADP + phosphate + 2 H(+). It carries out the reaction hydrogencarbonate + NH4(+) + 2 ATP = carbamoyl phosphate + 2 ADP + phosphate + 2 H(+). It participates in amino-acid biosynthesis; L-arginine biosynthesis; carbamoyl phosphate from bicarbonate: step 1/1. Its pathway is pyrimidine metabolism; UMP biosynthesis via de novo pathway; (S)-dihydroorotate from bicarbonate: step 1/3. Its function is as follows. Large subunit of the glutamine-dependent carbamoyl phosphate synthetase (CPSase). CPSase catalyzes the formation of carbamoyl phosphate from the ammonia moiety of glutamine, carbonate, and phosphate donated by ATP, constituting the first step of 2 biosynthetic pathways, one leading to arginine and/or urea and the other to pyrimidine nucleotides. The large subunit (synthetase) binds the substrates ammonia (free or transferred from glutamine from the small subunit), hydrogencarbonate and ATP and carries out an ATP-coupled ligase reaction, activating hydrogencarbonate by forming carboxy phosphate which reacts with ammonia to form carbamoyl phosphate. The sequence is that of Carbamoyl phosphate synthase large chain from Methanosarcina barkeri (strain Fusaro / DSM 804).